Here is a 192-residue protein sequence, read N- to C-terminus: Glycerol-3-phosphate acyltransferase (192 aa).

The next 5 helical transmembrane spans lie at 1–21, 51–71, 78–98, 112–132, and 155–175; these read MTSA…GVLL, LGAV…VLAV, PTVH…PVWL, VLLV…VAVF, and LTAR…LMLW.

It belongs to the PlsY family. Probably interacts with PlsX.

It is found in the cell inner membrane. It catalyses the reaction an acyl phosphate + sn-glycerol 3-phosphate = a 1-acyl-sn-glycero-3-phosphate + phosphate. It functions in the pathway lipid metabolism; phospholipid metabolism. Functionally, catalyzes the transfer of an acyl group from acyl-phosphate (acyl-PO(4)) to glycerol-3-phosphate (G3P) to form lysophosphatidic acid (LPA). This enzyme utilizes acyl-phosphate as fatty acyl donor, but not acyl-CoA or acyl-ACP. The polypeptide is Glycerol-3-phosphate acyltransferase (Myxococcus xanthus (strain DK1622)).